We begin with the raw amino-acid sequence, 293 residues long: MNEQELKQMIEGILTEMSGGKTTDTVAAVPTKSVVETVVTEGSIPDITEVDIKKQLLVPEPADREGYLKMKQMTPARLGLWRAGPRYKTETILRFRADHAVAQDSVFSYVSEDLVKEMNFIPVNTKCQDKDEYLTRPDLGREFDDEMVEVIRANTTKNAKLQIVVGDGLSSAAIEANIKDILPSIKQGLKMYNLDFDNIIFVKHCRVPSMDKIGEITGADVVCLLVGERPGLVTAESMSAYIAYKPTVGMPEARRTVISNIHSGGTPPVEAGAYIAELIHNMLEKKCSGIDLK.

Positions 207 and 228 each coordinate adenosylcob(III)alamin.

The protein belongs to the EutC family. In terms of assembly, the basic unit is a heterodimer which dimerizes to form tetramers. The heterotetramers trimerize; 6 large subunits form a core ring with 6 small subunits projecting outwards. It depends on adenosylcob(III)alamin as a cofactor.

It localises to the bacterial microcompartment. It carries out the reaction ethanolamine = acetaldehyde + NH4(+). The protein operates within amine and polyamine degradation; ethanolamine degradation. Functionally, catalyzes the deamination of various vicinal amino-alcohols to oxo compounds. Allows this organism to utilize ethanolamine as the sole source of nitrogen and carbon in the presence of external vitamin B12. The polypeptide is Ethanolamine ammonia-lyase small subunit (Listeria monocytogenes serovar 1/2a (strain ATCC BAA-679 / EGD-e)).